The following is a 217-amino-acid chain: Adenylate kinase (217 aa).

Glycine 10–threonine 15 provides a ligand contact to ATP. The interval serine 30 to valine 59 is NMP. Residues threonine 31, arginine 36, glutamate 57–valine 59, glycine 85–arginine 88, and glutamine 92 contribute to the AMP site. Residues tyrosine 126–aspartate 163 form an LID region. Position 127 (arginine 127) interacts with ATP. Residues cysteine 130 and cysteine 133 each contribute to the Zn(2+) site. Valine 136–tyrosine 137 contributes to the ATP binding site. The Zn(2+) site is built by cysteine 150 and cysteine 153. AMP contacts are provided by arginine 160 and arginine 171. An ATP-binding site is contributed by lysine 199.

Belongs to the adenylate kinase family. As to quaternary structure, monomer.

The protein resides in the cytoplasm. The catalysed reaction is AMP + ATP = 2 ADP. It participates in purine metabolism; AMP biosynthesis via salvage pathway; AMP from ADP: step 1/1. Its function is as follows. Catalyzes the reversible transfer of the terminal phosphate group between ATP and AMP. Plays an important role in cellular energy homeostasis and in adenine nucleotide metabolism. This chain is Adenylate kinase, found in Archaeoglobus fulgidus (strain ATCC 49558 / DSM 4304 / JCM 9628 / NBRC 100126 / VC-16).